The primary structure comprises 127 residues: Unclassified hydrophobin 5 (127 aa).

The N-terminal stretch at 1–24 (MFNKQTNAIVLLFTFALFATLAVA) is a signal peptide. Intrachain disulfides connect Cys39-Cys107, Cys46-Cys101, Cys47-Cys92, and Cys108-Cys121.

The protein belongs to the fungal hydrophobin family. As to quaternary structure, self-assembles to form functional amyloid fibrils called rodlets. Self-assembly into fibrillar rodlets occurs spontaneously at hydrophobic:hydrophilic interfaces and the rodlets further associate laterally to form amphipathic monolayers.

It is found in the secreted. It localises to the cell wall. Its function is as follows. Aerial growth, conidiation, and dispersal of filamentous fungi in the environment rely upon a capability of their secreting small amphipathic proteins called hydrophobins (HPBs) with low sequence identity. Class I can self-assemble into an outermost layer of rodlet bundles on aerial cell surfaces, conferring cellular hydrophobicity that supports fungal growth, development and dispersal; whereas Class II form highly ordered films at water-air interfaces through intermolecular interactions but contribute nothing to the rodlet structure. This chain is Unclassified hydrophobin 5, found in Pleurotus ostreatus (strain PC15) (Oyster mushroom).